Reading from the N-terminus, the 1155-residue chain is Cilia- and flagella-associated protein 251 (1155 aa).

Basic and acidic residues-rich tracts occupy residues 1-19 (MSDA…GETE) and 31-59 (KEVE…KTGE). Disordered stretches follow at residues 1–144 (MSDA…KLSL) and 167–225 (LDQI…DIQS). Residues 60-69 (EEGEEEEEKE) are compositionally biased toward acidic residues. Residues 70–95 (EEGKKDKKIVMEETEEKAGESQEKEA) are compositionally biased toward basic and acidic residues. A compositionally biased stretch (low complexity) spans 99–111 (QEETTVEPQEVTE). Composition is skewed to polar residues over residues 118 to 128 (TQITDSQSVTS) and 172 to 182 (PEEQQISSPER). The span at 201 to 220 (GQERRDLEPENREEGQERTV) shows a compositional bias: basic and acidic residues. 14 WD repeats span residues 341–383 (PVHT…IWKW), 391–431 (ACTL…AWYE), 442–481 (LLTE…VWDI), 499–534 (PCKL…FYDH), 537–597 (SIVN…VYHL), 601–641 (GTKL…VWNY), 647–684 (LFSR…ILDA), 694–730 (PFKY…MLVV), 737–780 (WEYL…GYDL), 791–831 (LDIH…LFNA), 837–883 (RKTL…ILPV), 889–927 (KTSA…QWKI), 965–1005 (YFYY…FYPS), and 1025–1065 (GKLI…GYTN).

The protein localises to the cytoplasm. The protein resides in the cytoskeleton. Its subcellular location is the cilium axoneme. It localises to the cell projection. It is found in the cilium. The protein localises to the flagellum. In terms of biological role, involved in spermatozoa motility. May also regulate cilium motility through its role in the assembly of the axonemal radial spokes. The sequence is that of Cilia- and flagella-associated protein 251 from Pongo abelii (Sumatran orangutan).